The primary structure comprises 59 residues: Large ribosomal subunit protein uL30 (59 aa).

This sequence belongs to the universal ribosomal protein uL30 family. In terms of assembly, part of the 50S ribosomal subunit.

The protein is Large ribosomal subunit protein uL30 of Psychrobacter arcticus (strain DSM 17307 / VKM B-2377 / 273-4).